A 243-amino-acid chain; its full sequence is UPF0688 protein C1orf174 (243 aa).

Disordered stretches follow at residues 78-100 and 132-243; these read NDSASLPKVTPETPCENEFAEGS and LAKT…DAEM. Over residues 145–157 the composition is skewed to low complexity; the sequence is SAGSGAEESNSSS. 2 positions are modified to phosphoserine: Ser148 and Ser189. Residues 233 to 243 are compositionally biased toward acidic residues; it reads DDDDDDDDAEM.

It belongs to the UPF0688 family.

The protein resides in the nucleus. The protein is UPF0688 protein C1orf174 (C1orf174) of Homo sapiens (Human).